Consider the following 119-residue polypeptide: Large ribosomal subunit protein uL18 (119 aa).

It belongs to the universal ribosomal protein uL18 family. In terms of assembly, part of the 50S ribosomal subunit; part of the 5S rRNA/L5/L18/L25 subcomplex. Contacts the 5S and 23S rRNAs.

In terms of biological role, this is one of the proteins that bind and probably mediate the attachment of the 5S RNA into the large ribosomal subunit, where it forms part of the central protuberance. The sequence is that of Large ribosomal subunit protein uL18 from Legionella pneumophila (strain Paris).